Reading from the N-terminus, the 425-residue chain is MREPDFLNHFLKKGYFKKHAKAVLALSGGLDSMFLFKVLSTYQKELEIELILAHVNHKQRIESDWEEKELRKLAAEAELPIYISNFSGEFSEARARNFRYDFFQEVMKKTGATALVTAHHADDQVETILMRLIRGTRLRYLSGIKEKQVVGEIEIIRPFLHFQKKDFPSIFHFEDTSNQENHYFRNRIRNSYLPELEKENPRFRDAILGIGNEILDYDLAIAELSNNINVENLQQLFSYSESTQRVLLQTYLNRFPDLNLTKAQFAEVQQILKSKSQYRHPIKNGYELIKEYQQFQICKISPQADEEEDELVLHYQNQVAYQGYLFSFGLPLEGELIQQIPVSRETSIHIRHRKTGDVLIQNGHRKKLRRLFIDLKIPMEKRNSALIIEQFGEIVSILGIATNNLSKKTKNDIMNTVLYIEKIDR.

Residue 27 to 32 (SGGLDS) coordinates ATP.

The protein belongs to the tRNA(Ile)-lysidine synthase family.

The protein localises to the cytoplasm. The catalysed reaction is cytidine(34) in tRNA(Ile2) + L-lysine + ATP = lysidine(34) in tRNA(Ile2) + AMP + diphosphate + H(+). Ligates lysine onto the cytidine present at position 34 of the AUA codon-specific tRNA(Ile) that contains the anticodon CAU, in an ATP-dependent manner. Cytidine is converted to lysidine, thus changing the amino acid specificity of the tRNA from methionine to isoleucine. The protein is tRNA(Ile)-lysidine synthase of Streptococcus pneumoniae (strain JJA).